Reading from the N-terminus, the 163-residue chain is Photosystem II extrinsic protein V (163 aa).

The first 26 residues, 1–26 (MLRKLILITVATVFFACQLLVNPVSA), serve as a signal peptide directing secretion. 4 residues coordinate heme c: Cys-63, Cys-66, His-67, and His-118.

It belongs to the cytochrome c family. PsbV subfamily. In terms of assembly, PSII is composed of 1 copy each of membrane proteins PsbA, PsbB, PsbC, PsbD, PsbE, PsbF, PsbH, PsbI, PsbJ, PsbK, PsbL, PsbM, PsbT, PsbX, PsbY, PsbZ, Psb30/Ycf12, peripheral proteins PsbO, CyanoQ (PsbQ), PsbU, PsbV and a large number of cofactors. It forms dimeric complexes. Requires heme c as cofactor.

Its subcellular location is the cellular thylakoid membrane. In terms of biological role, one of the extrinsic, lumenal subunits of photosystem II (PSII). PSII is a light-driven water plastoquinone oxidoreductase, using light energy to abstract electrons from H(2)O, generating a proton gradient subsequently used for ATP formation. The extrinsic proteins stabilize the structure of photosystem II oxygen-evolving complex (OEC), the ion environment of oxygen evolution and protect the OEC against heat-induced inactivation. Low-potential cytochrome c that plays a role in the OEC of PSII. In Aphanothece halophytica, this protein is Photosystem II extrinsic protein V.